The chain runs to 539 residues: Propionyl-CoA carboxylase beta chain, mitochondrial (539 aa).

A mitochondrion-targeting transit peptide spans 1–28; that stretch reads MAAAVRVTAARARLRVVVRSLHAGVRSL. The 259-residue stretch at 32-290 folds into the CoA carboxyltransferase N-terminal domain; it reads PVSVNERIEN…SNQDPAPIRE (259 aa). Residues 32–533 form a carboxyltransferase region; the sequence is PVSVNERIEN…SKKVQRPWRK (502 aa). Residue S71 is modified to Phosphoserine. K99 is subject to N6-acetyllysine; alternate. N6-succinyllysine; alternate is present on K99. In terms of domain architecture, CoA carboxyltransferase C-terminal spans 294 to 533; that stretch reads PSDRLVPELD…SKKVQRPWRK (240 aa). The acyl-CoA binding stretch occupies residues 325-358; it reads DERDFFEIMPNYAKNIIVGFARMNGRTVGIVGNQ. N6-acetyllysine; alternate is present on residues K474 and K489. N6-succinyllysine; alternate occurs at positions 474 and 489.

This sequence belongs to the AccD/PCCB family. In terms of assembly, the holoenzyme is a dodecamer composed of 6 PCCA/alpha subunits and 6 PCCB/beta subunits.

The protein localises to the mitochondrion matrix. It carries out the reaction propanoyl-CoA + hydrogencarbonate + ATP = (S)-methylmalonyl-CoA + ADP + phosphate + H(+). It catalyses the reaction butanoyl-CoA + hydrogencarbonate + ATP = (2S)-ethylmalonyl-CoA + ADP + phosphate + H(+). Its pathway is metabolic intermediate metabolism; propanoyl-CoA degradation; succinyl-CoA from propanoyl-CoA: step 1/3. This is one of the 2 subunits of the biotin-dependent propionyl-CoA carboxylase (PCC), a mitochondrial enzyme involved in the catabolism of odd chain fatty acids, branched-chain amino acids isoleucine, threonine, methionine, and valine and other metabolites. Propionyl-CoA carboxylase catalyzes the carboxylation of propionyl-CoA/propanoyl-CoA to D-methylmalonyl-CoA/(S)-methylmalonyl-CoA. Within the holoenzyme, the alpha subunit catalyzes the ATP-dependent carboxylation of the biotin carried by the biotin carboxyl carrier (BCC) domain, while the beta subunit then transfers the carboxyl group from carboxylated biotin to propionyl-CoA. Propionyl-CoA carboxylase also significantly acts on butyryl-CoA/butanoyl-CoA, which is converted to ethylmalonyl-CoA/(2S)-ethylmalonyl-CoA at a much lower rate. Other alternative minor substrates include (2E)-butenoyl-CoA/crotonoyl-CoA. The sequence is that of Propionyl-CoA carboxylase beta chain, mitochondrial from Sus scrofa (Pig).